The following is a 280-amino-acid chain: Eukaryotic translation initiation factor 3 subunit F-1 (280 aa).

Residues 8 to 138 (VRVHPVVLFQ…LRAYVCIQLG (131 aa)) enclose the MPN domain.

It belongs to the eIF-3 subunit F family. In terms of assembly, component of the eukaryotic translation initiation factor 3 (eIF-3) complex. The eIF-3 complex interacts with pix.

It localises to the cytoplasm. Its function is as follows. Component of the eukaryotic translation initiation factor 3 (eIF-3) complex, which is involved in protein synthesis of a specialized repertoire of mRNAs and, together with other initiation factors, stimulates binding of mRNA and methionyl-tRNAi to the 40S ribosome. The eIF-3 complex specifically targets and initiates translation of a subset of mRNAs involved in cell proliferation. This Drosophila ananassae (Fruit fly) protein is Eukaryotic translation initiation factor 3 subunit F-1.